Consider the following 290-residue polypeptide: MPNLKDLKNRIESVKSTRKITKAMQMVAAAKLRRAQDAAEASRPYTERFNAVLAGLAASVGDSDSGPRLLVGTGSDQTHLLVVMTAERGLCGGFNSSIAKLARAHAEKLVAQGKTVKILTVGKKGREQLKRDLSKHFIGHVDLSEVKRVSYDNAADIAADVLGRFDAGEFDVATIFFNRFQSVISQIPTAQQIIPASFEGDADADATLYDYEPSEEAILADLLPRGVATQIFAALLENGASEQGARMSAMDNATRNAGDMIERLTIEYNRSRQAVITNELIEIISGAEAL.

The protein belongs to the ATPase gamma chain family. In terms of assembly, F-type ATPases have 2 components, CF(1) - the catalytic core - and CF(0) - the membrane proton channel. CF(1) has five subunits: alpha(3), beta(3), gamma(1), delta(1), epsilon(1). CF(0) has three main subunits: a, b and c.

The protein resides in the cell inner membrane. Produces ATP from ADP in the presence of a proton gradient across the membrane. The gamma chain is believed to be important in regulating ATPase activity and the flow of protons through the CF(0) complex. The chain is ATP synthase gamma chain from Dinoroseobacter shibae (strain DSM 16493 / NCIMB 14021 / DFL 12).